We begin with the raw amino-acid sequence, 364 residues long: Fructose-1,6-bisphosphatase class 1 2 (364 aa).

Glu101, Asp123, Leu125, and Asp126 together coordinate Mg(2+). Residues 126–129 (DGSS) and Asn218 each bind substrate. Glu290 is a Mg(2+) binding site.

The protein belongs to the FBPase class 1 family. In terms of assembly, homotetramer. Mg(2+) is required as a cofactor.

The protein localises to the cytoplasm. The enzyme catalyses beta-D-fructose 1,6-bisphosphate + H2O = beta-D-fructose 6-phosphate + phosphate. It functions in the pathway carbohydrate biosynthesis; gluconeogenesis. This chain is Fructose-1,6-bisphosphatase class 1 2, found in Cupriavidus necator (strain ATCC 17699 / DSM 428 / KCTC 22496 / NCIMB 10442 / H16 / Stanier 337) (Ralstonia eutropha).